We begin with the raw amino-acid sequence, 253 residues long: CD151 antigen (253 aa).

Residues 1-18 (MGEFNEKKATCGTVCLKY) are Cytoplasmic-facing. S-palmitoyl cysteine attachment occurs at residues cysteine 11 and cysteine 15. Residues 19-39 (LLFTYNCCFWLAGLAVMAVGI) traverse the membrane as a helical segment. Residues 40–57 (WTLALKSDYISLLASSTY) lie on the Extracellular side of the membrane. Residues 58 to 78 (LATAYILVVAGVVVMVTGVLG) form a helical membrane-spanning segment. Residues 79–91 (CCATFKERRNLLR) are Cytoplasmic-facing. A helical transmembrane segment spans residues 92–112 (LYFILLLIIFLLEIIAGILAY). Over 113–221 (VYYQQLNTEL…LESFIQEHLR (109 aa)) the chain is Extracellular. Asparagine 159 carries N-linked (GlcNAc...) asparagine glycosylation. The chain crosses the membrane as a helical span at residues 222–242 (VIGAVGIGIACVQVFGMIFTC). S-palmitoyl cysteine attachment occurs at residues cysteine 242 and cysteine 243. Residues 243 to 253 (CLYRSLKLEHY) are Cytoplasmic-facing.

This sequence belongs to the tetraspanin (TM4SF) family. As to quaternary structure, interacts with integrins ITGA3:ITGB1, ITGA5:ITGB1, ITGA3:ITGB1 and ITGA6:ITGB4 and with CD9 and CD181. Interacts (via the second extracellular domain) with integrin ITGAV:ITGB3. Interacts with ITGA3; this interaction modulates ITGA3 glycosylation pattern. Interacts with F11R. Interacts with RAC1 and CDC42; these interactions mediate physical association of RAC1 and CDC42 with integrin adhesion receptor complexes. In terms of processing, palmitoylated. Palmitoylation by ZDHHC2 regulates CD151 expression, association with other tetraspanin family proteins and function in cell adhesion. Post-translationally, ubiquitinated by RNF128 on lysine residues present in the tetraspanin amino terminus via 'Lys-48'-linked ubiquitin leading to proteasomal degradation.

It is found in the cell membrane. Structural component of specialized membrane microdomains known as tetraspanin-enriched microdomains (TERMs), which act as platforms for receptor clustering and signaling. Plays a role in various cellular and molecular mechanism through its association with both integrin and non-integrin proteins. These interactions facilitate critical cellular functions, including cell-to-cell communication, wound healing, platelet aggregation, trafficking, cell motility, and angiogenesis. Via interaction with JAM-A/F11R and integrin ITGA3:ITGB1, promotes the recruitment of signaling molecules such as RAC1, CDC42 and RhoGTPases to facilitate the polarization of epithelial cells and the reorganization of the actin cytoskeleton, which are critical steps in cell migration process. Regulates the glycosylation pattern of ITGA3:ITGB1 thereby modulating its activity. Plays an essential role in the maintenance of central laminin-binding integrin ITGA6:ITGB4-containing adhesion complexes. Essential for the proper assembly of the glomerular and tubular basement membranes in kidney. Contributes to T-cell activation by modulating integrin signaling leading to activation of downstream targets PTK2 and MAPK1/MAPK3. In Rattus norvegicus (Rat), this protein is CD151 antigen (Cd151).